A 449-amino-acid chain; its full sequence is Chromosomal replication initiator protein DnaA (449 aa).

The interval 1–73 (MDADLKNLWD…ANSIKAVCSK (73 aa)) is domain I, interacts with DnaA modulators. Residues 73-110 (KLYTIEFIIMSEIYEKEEIKSSSNQKSKAIVVNDEMSS) are domain II. The tract at residues 111–327 (TLNPKYTFNS…GALIRIIAYS (217 aa)) is domain III, AAA+ region. 4 residues coordinate ATP: Gly-155, Gly-157, Lys-158, and Thr-159. The interval 328–449 (SLTNREVTVD…NDITKKLTQN (122 aa)) is domain IV, binds dsDNA.

It belongs to the DnaA family. Oligomerizes as a right-handed, spiral filament on DNA at oriC.

It is found in the cytoplasm. In terms of biological role, plays an essential role in the initiation and regulation of chromosomal replication. ATP-DnaA binds to the origin of replication (oriC) to initiate formation of the DNA replication initiation complex once per cell cycle. Binds the DnaA box (a 9 base pair repeat at the origin) and separates the double-stranded (ds)DNA. Forms a right-handed helical filament on oriC DNA; dsDNA binds to the exterior of the filament while single-stranded (ss)DNA is stabiized in the filament's interior. The ATP-DnaA-oriC complex binds and stabilizes one strand of the AT-rich DNA unwinding element (DUE), permitting loading of DNA polymerase. After initiation quickly degrades to an ADP-DnaA complex that is not apt for DNA replication. Binds acidic phospholipids. This Clostridium beijerinckii (strain ATCC 51743 / NCIMB 8052) (Clostridium acetobutylicum) protein is Chromosomal replication initiator protein DnaA.